The following is a 509-amino-acid chain: Pyruvate kinase (509 aa).

Phosphoserine is present on serine 29. Arginine 56 serves as a coordination point for substrate. K(+) contacts are provided by asparagine 58 and serine 60. An ATP-binding site is contributed by 58–61 (NFSH). Phosphoserine is present on serine 63. Residues aspartate 91 and threonine 92 each coordinate K(+). 2 residues coordinate ATP: arginine 98 and lysine 184. Glutamate 249 contacts Mg(2+). The substrate site is built by glycine 272 and aspartate 273. Residue aspartate 273 coordinates Mg(2+). Position 281 is a phosphoserine (serine 281). Residue threonine 305 coordinates substrate. Residue serine 412 is modified to Phosphoserine.

Belongs to the pyruvate kinase family. In terms of assembly, homotetramer. Requires Mg(2+) as cofactor. K(+) serves as cofactor.

The enzyme catalyses pyruvate + ATP = phosphoenolpyruvate + ADP + H(+). It functions in the pathway carbohydrate degradation; glycolysis; pyruvate from D-glyceraldehyde 3-phosphate: step 5/5. In Schizosaccharomyces pombe (strain 972 / ATCC 24843) (Fission yeast), this protein is Pyruvate kinase (pyk1).